Reading from the N-terminus, the 242-residue chain is Ubiquinone biosynthesis O-methyltransferase (242 aa).

S-adenosyl-L-methionine is bound by residues arginine 44, glycine 64, aspartate 85, and methionine 129.

The protein belongs to the methyltransferase superfamily. UbiG/COQ3 family.

The enzyme catalyses a 3-demethylubiquinol + S-adenosyl-L-methionine = a ubiquinol + S-adenosyl-L-homocysteine + H(+). The catalysed reaction is a 3-(all-trans-polyprenyl)benzene-1,2-diol + S-adenosyl-L-methionine = a 2-methoxy-6-(all-trans-polyprenyl)phenol + S-adenosyl-L-homocysteine + H(+). Its pathway is cofactor biosynthesis; ubiquinone biosynthesis. Its function is as follows. O-methyltransferase that catalyzes the 2 O-methylation steps in the ubiquinone biosynthetic pathway. The polypeptide is Ubiquinone biosynthesis O-methyltransferase (Citrobacter koseri (strain ATCC BAA-895 / CDC 4225-83 / SGSC4696)).